The following is a 329-amino-acid chain: Beta-ketoacyl-[acyl-carrier-protein] synthase III (329 aa).

Catalysis depends on residues cysteine 113 and histidine 255. The interval 256-260 (QANQR) is ACP-binding. The active site involves asparagine 285.

This sequence belongs to the thiolase-like superfamily. FabH family. In terms of assembly, homodimer.

The protein localises to the cytoplasm. It carries out the reaction malonyl-[ACP] + acetyl-CoA + H(+) = 3-oxobutanoyl-[ACP] + CO2 + CoA. The protein operates within lipid metabolism; fatty acid biosynthesis. Catalyzes the condensation reaction of fatty acid synthesis by the addition to an acyl acceptor of two carbons from malonyl-ACP. Catalyzes the first condensation reaction which initiates fatty acid synthesis and may therefore play a role in governing the total rate of fatty acid production. Possesses both acetoacetyl-ACP synthase and acetyl transacylase activities. Its substrate specificity determines the biosynthesis of branched-chain and/or straight-chain of fatty acids. The sequence is that of Beta-ketoacyl-[acyl-carrier-protein] synthase III from Chlorobaculum tepidum (strain ATCC 49652 / DSM 12025 / NBRC 103806 / TLS) (Chlorobium tepidum).